The chain runs to 227 residues: NADH-quinone oxidoreductase subunit C (227 aa).

Belongs to the complex I 30 kDa subunit family. As to quaternary structure, NDH-1 is composed of 14 different subunits. Subunits NuoB, C, D, E, F, and G constitute the peripheral sector of the complex.

It is found in the cell inner membrane. The enzyme catalyses a quinone + NADH + 5 H(+)(in) = a quinol + NAD(+) + 4 H(+)(out). Functionally, NDH-1 shuttles electrons from NADH, via FMN and iron-sulfur (Fe-S) centers, to quinones in the respiratory chain. The immediate electron acceptor for the enzyme in this species is believed to be ubiquinone. Couples the redox reaction to proton translocation (for every two electrons transferred, four hydrogen ions are translocated across the cytoplasmic membrane), and thus conserves the redox energy in a proton gradient. This Legionella pneumophila (strain Corby) protein is NADH-quinone oxidoreductase subunit C.